A 70-amino-acid polypeptide reads, in one-letter code: DNA-directed RNA polymerase subunit epsilon (70 aa).

It belongs to the RNA polymerase subunit epsilon family. As to quaternary structure, RNAP is composed of a core of 2 alpha, a beta and a beta' subunit. The core is associated with a delta subunit, and at least one of epsilon or omega. When a sigma factor is associated with the core the holoenzyme is formed, which can initiate transcription.

The enzyme catalyses RNA(n) + a ribonucleoside 5'-triphosphate = RNA(n+1) + diphosphate. A non-essential component of RNA polymerase (RNAP). This Bacillus cereus (strain ZK / E33L) protein is DNA-directed RNA polymerase subunit epsilon.